Reading from the N-terminus, the 388-residue chain is Cell adhesion molecule 4 (388 aa).

A signal peptide spans 1-20 (MGRARRFQWPLLLLWAAAAG). Residues 21-119 (PGAGQEVQTE…DTHHQIATLT (99 aa)) enclose the Ig-like V-type domain. The Extracellular portion of the chain corresponds to 21 to 324 (PGAGQEVQTE…VEAQTSVPYA (304 aa)). N31 and N67 each carry an N-linked (GlcNAc...) asparagine glycan. 3 cysteine pairs are disulfide-bonded: C44/C104, C145/C199, and C245/C291. 2 consecutive Ig-like C2-type domains span residues 124-219 (PENP…YVLD) and 224-307 (PTAR…YVLV). N286 carries N-linked (GlcNAc...) asparagine glycosylation. Residues 325-345 (IVGGILALLVFLIICVLVGMV) form a helical membrane-spanning segment. The Cytoplasmic portion of the chain corresponds to 346–388 (WCSVRQKGSYLTHEASGLDEQGEAREAFLNGSDGHKRKEEFFI). S361 carries the post-translational modification Phosphoserine.

It belongs to the nectin family. Monomer and homodimer. N-glycosylated. In terms of tissue distribution, expressed in brain, prostate, brain, kidney and some other organs.

Its subcellular location is the membrane. Its function is as follows. Involved in the cell-cell adhesion. Has calcium- and magnesium-independent cell-cell adhesion activity. May have tumor-suppressor activity. The polypeptide is Cell adhesion molecule 4 (CADM4) (Homo sapiens (Human)).